An 82-amino-acid polypeptide reads, in one-letter code: MSFWDYFRSNKQATASVAKERLQIIVAHERSQRNQPDYLPQLQQEILEVIGKYVKINREDIQVQIDRNDDCAVLELNITLPE.

Belongs to the MinE family.

Functionally, prevents the cell division inhibition by proteins MinC and MinD at internal division sites while permitting inhibition at polar sites. This ensures cell division at the proper site by restricting the formation of a division septum at the midpoint of the long axis of the cell. The chain is Cell division topological specificity factor from Hahella chejuensis (strain KCTC 2396).